We begin with the raw amino-acid sequence, 137 residues long: Large ribosomal subunit protein uL16 (137 aa).

This sequence belongs to the universal ribosomal protein uL16 family. As to quaternary structure, part of the 50S ribosomal subunit.

Binds 23S rRNA and is also seen to make contacts with the A and possibly P site tRNAs. The sequence is that of Large ribosomal subunit protein uL16 from Mycoplasma capricolum subsp. capricolum (strain California kid / ATCC 27343 / NCTC 10154).